Reading from the N-terminus, the 311-residue chain is Homeobox-leucine zipper protein HOX1 (311 aa).

Disordered regions lie at residues 29–69 (AGGA…SDHR) and 97–160 (AETT…KKLR). A compositionally biased stretch (low complexity) spans 119-145 (SSPNSTLSSLSGKRGAPSAATAAAAAA). Residues 154–213 (GSRKKLRLSKDQAAVLEDTFKEHNTLNPKQKAALARQLNLKPRQVEVWFQNRRARTKLKQ) constitute a DNA-binding region (homeobox). A leucine-zipper region spans residues 212–256 (KQTEVDCELLKRCCETLTDENRRLHRELQELRALKLATAAAAPHH). The segment at 279-311 (SAATTTRNNSGAAPARPVPTRPWPPAAAQRSSA) is disordered. Positions 280–289 (AATTTRNNSG) are enriched in polar residues. Residues 294 to 303 (RPVPTRPWPP) are compositionally biased toward pro residues.

This sequence belongs to the HD-ZIP homeobox family. Class II subfamily. As to quaternary structure, homodimer. May form a heterodimer with HOX2, HOX3 or HOX7. As to expression, expressed in root provascular and vascular cylinder, provascular and vascular strands of leaves, provascular and vascular strands of the whole panicle, in mature embryo provascular bundles of scutellum and embryonic axis and provascular and vascular strands of young immature spikelet organs. Expressed in differentiating and differentiated xylem and phloem elements, and in outer and inner bundle sheath cells of all vascular bundles. Expressed in auricles, ligules, culm, guard cells brac hairs and pollen.

It is found in the nucleus. Its function is as follows. Probable transcription repressor involved leaf development. Binds to the DNA sequence 5'-CAAT[GC]ATTG-3'. May act as a regulatory switch to specify provascular cell fate. The sequence is that of Homeobox-leucine zipper protein HOX1 (HOX1) from Oryza sativa subsp. indica (Rice).